Reading from the N-terminus, the 372-residue chain is G patch domain and ankyrin repeat-containing protein 1 (372 aa).

The interval 74-110 (DSSSSKPQRAEPMRERKKKRRRVTREPAAAGVPRQGR) is disordered. ANK repeat units follow at residues 124 to 155 (LAAQ…ARDA) and 156 to 186 (FWWT…WVGV). Disordered stretches follow at residues 211–233 (RESH…SSQF) and 251–271 (AHLL…GVPT). Positions 220 to 233 (PENQNRSTPSSSQF) are enriched in polar residues. One can recognise a G-patch domain in the interval 271–317 (TSSPGFRLLLRGGWEPGMGLGPRGEGRANPIPTILKRDQEGLGYRSP). K306 is covalently cross-linked (Glycyl lysine isopeptide (Lys-Gly) (interchain with G-Cter in SUMO2)). 2 stretches are compositionally biased toward basic and acidic residues: residues 330–340 (TRAVSGRERVP) and 348–357 (RENRRQEEKG). Positions 330–357 (TRAVSGRERVPRVATLSQRENRRQEEKG) are disordered.

This is G patch domain and ankyrin repeat-containing protein 1 (Gpank1) from Mus musculus (Mouse).